Consider the following 110-residue polypeptide: Flowering-promoting factor 1 (110 aa).

The protein belongs to the FPF1 family.

Modulates the competence to flowering of apical meristems. Involved in a GA-dependent response in apical meristems during the transition to flowering. The sequence is that of Flowering-promoting factor 1 (FPF1) from Arabidopsis thaliana (Mouse-ear cress).